A 244-amino-acid polypeptide reads, in one-letter code: Sperm-egg fusion protein Juno (244 aa).

Residues 1–19 (MAQWWLILLGLWTVLPSLA) form the signal peptide. Cystine bridges form between Cys-27–Cys-55, Cys-47–Cys-95, Cys-56–Cys-99, Cys-79–Cys-166, Cys-86–Cys-137, Cys-126–Cys-200, Cys-130–Cys-180, and Cys-143–Cys-160. The interval 62-81 (WEAHLDEPLLFNFSMTHCGL) is important for interaction with IZUMO1. A glycan (N-linked (GlcNAc...) asparagine) is linked at Asn-73. The propeptide occupies 223 to 244 (SASAPQLSYSITAFSLCLLLHA).

It belongs to the folate receptor family. As to quaternary structure, monomer. Interacts with IZUMO1; the interaction is direct. IZUMO1 and IZUMO1R/JUNO form a complex with 1:1 stoichiometry. Interacts with FCRL3/MAIA; FCRL3/MAIA replaces IZUMO1R/JUNO as IZUMO1 receptor after sperm-egg adhesion, thereby permitting species-specific gamete fusion. Interacts with WDR54. The protein is rapidly cleaved following fertilization, being only weakly detectable in zona-intact fertilized eggs at telophase II and undetectable at the pronuclear stage. Sheding is probably required to block to polyspermy and ensuring egg fusion with a single sperm. As to expression, expressed in the oocyte (at protein level).

It localises to the cell membrane. The protein resides in the cell projection. Its subcellular location is the microvillus membrane. Functionally, receptor for IZUMO1 present at the cell surface of oocytes (oolemma), which is essential for species-specific gamete recognition and fertilization. The IZUMO1:IZUMO1R/JUNO interaction is a necessary adhesion event between sperm and egg that is required for fertilization but is not sufficient for cell fusion. The ligand-receptor interaction probably does not act as a membrane 'fusogen'. Does not bind folate. The chain is Sperm-egg fusion protein Juno (Izumo1r) from Rattus norvegicus (Rat).